The primary structure comprises 128 residues: SH2 domain-containing protein 1A (128 aa).

Residues 6-102 (VYHGKISRET…GIVIPLQYPV (97 aa)) form the SH2 domain. Residues 67 to 92 (ETAPGVHKRYFRKIKNLISAFQKPDQ) are interaction with FYN SH3 domain. Lys-89 bears the N6-acetyllysine mark. The tract at residues 106–128 (SSARSTQGTTGIREDPDVCLKAP) is disordered. Residues 117 to 128 (IREDPDVCLKAP) are compositionally biased toward basic and acidic residues.

In terms of assembly, interacts with CD84, CD244, LY9, SLAMF1 and FYN. Interacts with NTRK1, NTRK2 and NTRK3.

It is found in the cytoplasm. Its function is as follows. Cytoplasmic adapter regulating receptors of the signaling lymphocytic activation molecule (SLAM) family such as SLAMF1, CD244, LY9, CD84, SLAMF6 and SLAMF7. In SLAM signaling seems to cooperate with SH2D1B/EAT-2. Initially it has been proposed that association with SLAMF1 prevents SLAMF1 binding to inhibitory effectors including INPP5D/SHIP1 and PTPN11/SHP-2. However, by simultaneous interactions, recruits FYN which subsequently phosphorylates and activates SLAMF1. Positively regulates CD244/2B4- and CD84-mediated natural killer (NK) cell functions. Can also promote CD48-, SLAMF6 -, LY9-, and SLAMF7-mediated NK cell activation. In the context of NK cell-mediated cytotoxicity enhances conjugate formation with target cells. May also regulate the activity of the neurotrophin receptors NTRK1, NTRK2 and NTRK3. This is SH2 domain-containing protein 1A (SH2D1A) from Macaca mulatta (Rhesus macaque).